The following is a 308-amino-acid chain: Methionyl-tRNA formyltransferase (308 aa).

109–112 (SLLP) is a binding site for (6S)-5,6,7,8-tetrahydrofolate.

Belongs to the Fmt family.

It catalyses the reaction L-methionyl-tRNA(fMet) + (6R)-10-formyltetrahydrofolate = N-formyl-L-methionyl-tRNA(fMet) + (6S)-5,6,7,8-tetrahydrofolate + H(+). In terms of biological role, attaches a formyl group to the free amino group of methionyl-tRNA(fMet). The formyl group appears to play a dual role in the initiator identity of N-formylmethionyl-tRNA by promoting its recognition by IF2 and preventing the misappropriation of this tRNA by the elongation apparatus. This Rhizorhabdus wittichii (strain DSM 6014 / CCUG 31198 / JCM 15750 / NBRC 105917 / EY 4224 / RW1) (Sphingomonas wittichii) protein is Methionyl-tRNA formyltransferase.